The chain runs to 246 residues: V-type proton ATPase subunit D (246 aa).

It belongs to the V-ATPase D subunit family. In terms of assembly, V-ATPase is a heteromultimeric enzyme made up of two complexes: the ATP-hydrolytic V1 complex and the proton translocation V0 complex. The V1 complex consists of three catalytic AB heterodimers that form a heterohexamer, three peripheral stalks each consisting of EG heterodimers, one central rotor including subunits D and F, and the regulatory subunits C and H. The proton translocation complex V0 consists of the proton transport subunit a, a ring of proteolipid subunits c9c'', rotary subunit d, subunits e and f, and the accessory subunits VhaAC45 and ATP6AP2.

Subunit of the V1 complex of vacuolar(H+)-ATPase (V-ATPase), a multisubunit enzyme composed of a peripheral complex (V1) that hydrolyzes ATP and a membrane integral complex (V0) that translocates protons. V-ATPase is responsible for acidifying and maintaining the pH of intracellular compartments and in some cell types, is targeted to the plasma membrane, where it is responsible for acidifying the extracellular environment. The polypeptide is V-type proton ATPase subunit D (Manduca sexta (Tobacco hawkmoth)).